The chain runs to 161 residues: Hydrogenase expression/formation protein HoxO (161 aa).

Belongs to the HupG/HyaE family.

The chain is Hydrogenase expression/formation protein HoxO (hoxO) from Cupriavidus necator (strain ATCC 17699 / DSM 428 / KCTC 22496 / NCIMB 10442 / H16 / Stanier 337) (Ralstonia eutropha).